A 454-amino-acid polypeptide reads, in one-letter code: tRNA modification GTPase MnmE (454 aa).

Residues Arg-23, Glu-80, and Lys-120 each coordinate (6S)-5-formyl-5,6,7,8-tetrahydrofolate. The 162-residue stretch at Gly-216–Gly-377 folds into the TrmE-type G domain. A K(+)-binding site is contributed by Asn-226. Residues Asn-226–Ser-231, Thr-245–Thr-251, Asp-270–Gly-273, Asn-335–Asp-338, and Ser-358–Arg-360 each bind GTP. Ser-230 is a Mg(2+) binding site. K(+)-binding residues include Thr-245, Ile-247, and Thr-250. Thr-251 serves as a coordination point for Mg(2+). Position 454 (Lys-454) interacts with (6S)-5-formyl-5,6,7,8-tetrahydrofolate.

It belongs to the TRAFAC class TrmE-Era-EngA-EngB-Septin-like GTPase superfamily. TrmE GTPase family. In terms of assembly, homodimer. Heterotetramer of two MnmE and two MnmG subunits. The cofactor is K(+).

It localises to the cytoplasm. In terms of biological role, exhibits a very high intrinsic GTPase hydrolysis rate. Involved in the addition of a carboxymethylaminomethyl (cmnm) group at the wobble position (U34) of certain tRNAs, forming tRNA-cmnm(5)s(2)U34. This Salmonella arizonae (strain ATCC BAA-731 / CDC346-86 / RSK2980) protein is tRNA modification GTPase MnmE.